The sequence spans 70 residues: SPbeta prophage-derived uncharacterized protein YorZ (70 aa).

This Bacillus subtilis (strain 168) protein is SPbeta prophage-derived uncharacterized protein YorZ (yorZ).